The primary structure comprises 295 residues: Inward rectifier potassium channel Kirbac3.1 (295 aa).

The Cytoplasmic segment spans residues 1-47; sequence MTGGMKPPARKPRILNSDGSSNITRLGLEKRGWLDDHYHDLLTVSWP. A helical membrane pass occupies residues 48 to 69; sequence VFITLITGLYLVTNALFALAYL. Residues 70–82 are Extracellular-facing; sequence ACGDVIENARPGS. Residues 83–95 constitute an intramembrane region (helical; Pore-forming); it reads FTDAFFFSVQTMA. A Selectivity filter motif is present at residues 96–100; that stretch reads TIGYG. A helical transmembrane segment spans residues 107–131; it reads PLANTLVTLEALCGMLGLAVAASLI. The Cytoplasmic segment spans residues 132–295; the sequence is YARFTRPTAG…DLGKFHEIAQ (164 aa).

This sequence belongs to the inward rectifier-type potassium channel (TC 1.A.2.1) family. KCNJ11 subfamily. In terms of assembly, homotetramer.

It is found in the membrane. Functionally, inward rectifier potassium channel that mediates potassium uptake into the cell. Inward rectifier potassium channels are characterized by a greater tendency to allow potassium to flow into the cell rather than out of it. The inward rectification may be achieved by the blockage of outward current by cytoplasmic divalent metal ions and polyamines. Complements an E.coli mutant that is defective in K(+) uptake. In Paramagnetospirillum magnetotacticum (Aquaspirillum magnetotacticum), this protein is Inward rectifier potassium channel Kirbac3.1.